A 175-amino-acid chain; its full sequence is Microfibril-associated glycoprotein 3 (175 aa).

Over 1–175 (FRTEGAEKLQ…KDGSFESCQL (175 aa)) the chain is Cytoplasmic. The disordered stretch occupies residues 85-175 (KERPALNAQD…KDGSFESCQL (91 aa)). The segment covering 145 to 175 (QDSSHFSPPDDTGSTESNSNYKDGSFESCQL) has biased composition (polar residues).

Post-translationally, glycosylated.

The protein resides in the cell membrane. In terms of biological role, component of the elastin-associated microfibrils. The chain is Microfibril-associated glycoprotein 3 (MFAP3) from Bos taurus (Bovine).